Here is an 85-residue protein sequence, read N- to C-terminus: UPF0512 protein U (85 aa).

This sequence belongs to the UPF0512 family.

In Dictyostelium discoideum (Social amoeba), this protein is UPF0512 protein U.